The sequence spans 64 residues: Small ribosomal subunit protein eS17 (64 aa).

The protein belongs to the eukaryotic ribosomal protein eS17 family.

In Natronomonas pharaonis (strain ATCC 35678 / DSM 2160 / CIP 103997 / JCM 8858 / NBRC 14720 / NCIMB 2260 / Gabara) (Halobacterium pharaonis), this protein is Small ribosomal subunit protein eS17.